The chain runs to 127 residues: Small ribosomal subunit protein uS11 (127 aa).

The protein belongs to the universal ribosomal protein uS11 family. As to quaternary structure, part of the 30S ribosomal subunit. Interacts with proteins S7 and S18. Binds to IF-3.

Functionally, located on the platform of the 30S subunit, it bridges several disparate RNA helices of the 16S rRNA. Forms part of the Shine-Dalgarno cleft in the 70S ribosome. This is Small ribosomal subunit protein uS11 from Rhodopirellula baltica (strain DSM 10527 / NCIMB 13988 / SH1).